Reading from the N-terminus, the 570-residue chain is Sulfite reductase [NADPH] hemoprotein beta-component (570 aa).

C434, C440, C479, and C483 together coordinate [4Fe-4S] cluster. C483 contacts siroheme.

This sequence belongs to the nitrite and sulfite reductase 4Fe-4S domain family. Alpha(8)-beta(8). The alpha component is a flavoprotein, the beta component is a hemoprotein. The cofactor is siroheme. [4Fe-4S] cluster serves as cofactor.

The catalysed reaction is hydrogen sulfide + 3 NADP(+) + 3 H2O = sulfite + 3 NADPH + 4 H(+). The protein operates within sulfur metabolism; hydrogen sulfide biosynthesis; hydrogen sulfide from sulfite (NADPH route): step 1/1. Functionally, component of the sulfite reductase complex that catalyzes the 6-electron reduction of sulfite to sulfide. This is one of several activities required for the biosynthesis of L-cysteine from sulfate. The polypeptide is Sulfite reductase [NADPH] hemoprotein beta-component (Escherichia coli O9:H4 (strain HS)).